The sequence spans 549 residues: TBC1 domain family member 3 (549 aa).

The region spanning 101 to 293 (GMPMNIRGPM…RLWDVYLVEG (193 aa)) is the Rab-GAP TBC domain. Residues Cys318 and Cys325 are each lipidated (S-palmitoyl cysteine). A disordered region spans residues 350-419 (LTRKKGDLPP…PRSSTPCPGG (70 aa)). Residues 398 to 417 (PRPIWSASPPRAPRSSTPCP) show a composition bias toward low complexity.

In terms of processing, ubiquitinated by a CUL7-based E3 ligase, which leads to proteasomal degradation. Palmitoylation is required for membrane localization and protects TBC1D3 from ubiquitination. As to expression, expressed in liver, skeletal muscle, kidney, pancreas, spleen, testis, ovary, small intestine and peripheral blood leukocytes. Overexpressed in prostate cancers.

Its subcellular location is the cell membrane. In terms of biological role, acts as a GTPase activating protein for RAB5. Does not act on RAB4 or RAB11. In Homo sapiens (Human), this protein is TBC1 domain family member 3 (TBC1D3).